Consider the following 188-residue polypeptide: Protein-arginine kinase activator protein (188 aa).

4 consecutive short sequence motifs (CXXC metal binding motif) follow at residues 3–6 (CENC), 29–32 (CQTC), 87–90 (CPSC), and 105–108 (CANC). The 36-residue stretch at 145–180 (KRKIEEKNEYLKKLIEIQDFEEAAIVRDEIKALKAE) folds into the UVR domain.

Interacts with McsB and CtsR; the CXXC motifs are needed for the binding.

Activates the phosphorylation activity of the protein-arginine kinase McsB. May function as an important molecule for oxidative tolerance in various types of stress including that of heavy metals. Binds to Cu(2+), Zn(2+), Co(2+) and Cd(2+) via its CXXC metal binding motifs. The sequence is that of Protein-arginine kinase activator protein from Staphylococcus aureus (strain NCTC 8325 / PS 47).